A 546-amino-acid polypeptide reads, in one-letter code: Probable protein kinase UbiB (546 aa).

The region spanning 124–502 (DFDIKPLASA…RVRQGQSRYL (379 aa)) is the Protein kinase domain. ATP is bound by residues 130-138 (LASASIAQV) and Lys153. Residue Asp288 is the Proton acceptor of the active site. 2 consecutive transmembrane segments (helical) span residues 501–521 (YLFG…INRP) and 522–542 (DWQM…LIGW).

The protein belongs to the ABC1 family. UbiB subfamily.

The protein resides in the cell inner membrane. It participates in cofactor biosynthesis; ubiquinone biosynthesis [regulation]. In terms of biological role, is probably a protein kinase regulator of UbiI activity which is involved in aerobic coenzyme Q (ubiquinone) biosynthesis. The protein is Probable protein kinase UbiB of Enterobacter sp. (strain 638).